A 393-amino-acid polypeptide reads, in one-letter code: STE20-related kinase adapter protein alpha (393 aa).

Ser2 and Ser9 each carry phosphoserine. The 310-residue stretch at Tyr32–Phe341 folds into the Protein kinase domain. Position 381 is a phosphothreonine; by LKB1 (Thr381).

It belongs to the protein kinase superfamily. STE Ser/Thr protein kinase family. STE20 subfamily. Component of a trimeric complex composed of STK11/LKB1, STRAD (STRADA or STRADB) and CAB39/MO25 (CAB39/MO25alpha or CAB39L/MO25beta): the complex tethers STK11/LKB1 in the cytoplasm and stimulates its catalytic activity. As to expression, expressed in liver.

The protein localises to the nucleus. It is found in the cytoplasm. Its function is as follows. Pseudokinase which, in complex with CAB39/MO25 (CAB39/MO25alpha or CAB39L/MO25beta), binds to and activates STK11/LKB1. Adopts a closed conformation typical of active protein kinases and binds STK11/LKB1 as a pseudosubstrate, promoting conformational change of STK11/LKB1 in an active conformation. The protein is STE20-related kinase adapter protein alpha (Strada) of Rattus norvegicus (Rat).